Here is a 411-residue protein sequence, read N- to C-terminus: Translation initiation factor 2 subunit gamma (411 aa).

Residues 9-203 form the tr-type G domain; the sequence is QAEVNIGMVG…AIEDFIPTPK (195 aa). The segment at 18 to 25 is G1; it reads GHVDHGKT. The Mg(2+) site is built by aspartate 21, threonine 25, glycine 46, and threonine 48. 21–26 lines the GTP pocket; the sequence is DHGKTT. A G2 region spans residues 46 to 50; it reads GITIK. Cysteine 61, cysteine 64, cysteine 73, and cysteine 76 together coordinate Zn(2+). Residues 90–93 are G3; sequence DAPG. Residues 146 to 149 and 181 to 183 each bind GTP; these read NKIE and SAL. The segment at 146–149 is G4; sequence NKIE. A G5 region spans residues 181–183; that stretch reads SAL.

It belongs to the TRAFAC class translation factor GTPase superfamily. Classic translation factor GTPase family. EIF2G subfamily. In terms of assembly, heterotrimer composed of an alpha, a beta and a gamma chain. The cofactor is Mg(2+).

It catalyses the reaction GTP + H2O = GDP + phosphate + H(+). In terms of biological role, eIF-2 functions in the early steps of protein synthesis by forming a ternary complex with GTP and initiator tRNA. The protein is Translation initiation factor 2 subunit gamma of Pyrococcus abyssi (strain GE5 / Orsay).